The chain runs to 466 residues: L-seryl-tRNA(Sec) selenium transferase (466 aa).

Lys294 is subject to N6-(pyridoxal phosphate)lysine.

It belongs to the SelA family. It depends on pyridoxal 5'-phosphate as a cofactor.

Its subcellular location is the cytoplasm. The catalysed reaction is L-seryl-tRNA(Sec) + selenophosphate + H(+) = L-selenocysteinyl-tRNA(Sec) + phosphate. It functions in the pathway aminoacyl-tRNA biosynthesis; selenocysteinyl-tRNA(Sec) biosynthesis; selenocysteinyl-tRNA(Sec) from L-seryl-tRNA(Sec) (bacterial route): step 1/1. Functionally, converts seryl-tRNA(Sec) to selenocysteinyl-tRNA(Sec) required for selenoprotein biosynthesis. The polypeptide is L-seryl-tRNA(Sec) selenium transferase (Carboxydothermus hydrogenoformans (strain ATCC BAA-161 / DSM 6008 / Z-2901)).